The sequence spans 321 residues: Probable NAD(P)H-dependent D-xylose reductase xyl1 (321 aa).

Tyrosine 50 serves as the catalytic Proton donor. Histidine 112 contributes to the substrate binding site. Residues 166–167 (SN), 215–224 (SSFGPLSFVE), and 271–281 (KSNDPTRLAQN) each bind NAD(+).

This sequence belongs to the aldo/keto reductase family.

It carries out the reaction xylitol + NAD(+) = D-xylose + NADH + H(+). It catalyses the reaction xylitol + NADP(+) = D-xylose + NADPH + H(+). Its pathway is carbohydrate metabolism; D-xylose degradation. In terms of biological role, catalyzes the initial reaction in the xylose utilization pathway by reducing D-xylose into xylitol. Xylose is a major component of hemicelluloses such as xylan. Most fungi utilize D-xylose via three enzymatic reactions, xylose reductase (XR), xylitol dehydrogenase (XDH), and xylulokinase, to form xylulose 5-phosphate, which enters pentose phosphate pathway. This Neosartorya fischeri (strain ATCC 1020 / DSM 3700 / CBS 544.65 / FGSC A1164 / JCM 1740 / NRRL 181 / WB 181) (Aspergillus fischerianus) protein is Probable NAD(P)H-dependent D-xylose reductase xyl1 (xyl1).